The primary structure comprises 160 residues: Transcription elongation factor GreA (160 aa).

Residues 1–72 (MAEKTYVMTL…QIQILETKIR (72 aa)) are a coiled coil.

The protein belongs to the GreA/GreB family.

Necessary for efficient RNA polymerase transcription elongation past template-encoded arresting sites. The arresting sites in DNA have the property of trapping a certain fraction of elongating RNA polymerases that pass through, resulting in locked ternary complexes. Cleavage of the nascent transcript by cleavage factors such as GreA or GreB allows the resumption of elongation from the new 3'terminus. GreA releases sequences of 2 to 3 nucleotides. This Streptococcus thermophilus (strain CNRZ 1066) protein is Transcription elongation factor GreA.